Reading from the N-terminus, the 890-residue chain is Phosphotransferase RcsD (890 aa).

At 1 to 21 (MRQKETTATTRFSLLPGSITR) the chain is on the cytoplasmic side. A helical transmembrane segment spans residues 22–42 (FFLLLIIVLLVTMGVMVQSAV). At 43 to 308 (NAWLKDKSYQ…GTLLLDTLQN (266 aa)) the chain is on the periplasmic side. A helical transmembrane segment spans residues 309–329 (ILLPLLLNIGLLALALFGYTT). Topologically, residues 330-890 (FRHFSSRSTE…DIDSYVKSLL (561 aa)) are cytoplasmic. The segment at 468-678 (NIGDALKEPA…RYSVHIKMLA (211 aa)) is histidine-like kinase. The HPt domain occupies 803–890 (AQLHASGYYA…DIDSYVKSLL (88 aa)). A Phosphohistidine modification is found at His842.

The protein belongs to the RcsD family. Interacts with RcsC and RcsB. Has a higher affinity for RcsB than for RcsC. Post-translationally, phosphorylated by RcsC.

The protein localises to the cell inner membrane. Functionally, component of the Rcs signaling system, which controls transcription of numerous genes. RcsD is a phosphotransfer intermediate between the sensor kinase RcsC and the response regulator RcsB. It acquires a phosphoryl group from RcsC and transfers it to RcsB. The system controls expression of genes involved in colanic acid capsule synthesis, biofilm formation and cell division. This chain is Phosphotransferase RcsD, found in Escherichia coli (strain K12).